Here is a 244-residue protein sequence, read N- to C-terminus: Transcriptional activator protein CarR (244 aa).

The 66-residue stretch at 162–227 (DNSRNALLSP…HAITKALELN (66 aa)) folds into the HTH luxR-type domain. Residues 186–205 (YKEVSRILGISEVTVKFHIN) constitute a DNA-binding region (H-T-H motif).

Belongs to the autoinducer-regulated transcriptional regulatory protein family.

Functionally, functions as an OHLL responsive transcriptional regulator which acts in the control of the biosynthesis of carbapenem antibiotics. This chain is Transcriptional activator protein CarR (carR), found in Pectobacterium carotovorum subsp. carotovorum (Erwinia carotovora subsp. carotovora).